Here is a 137-residue protein sequence, read N- to C-terminus: Large ribosomal subunit protein uL16 (137 aa).

Belongs to the universal ribosomal protein uL16 family. Part of the 50S ribosomal subunit.

In terms of biological role, binds 23S rRNA and is also seen to make contacts with the A and possibly P site tRNAs. This is Large ribosomal subunit protein uL16 from Afipia carboxidovorans (strain ATCC 49405 / DSM 1227 / KCTC 32145 / OM5) (Oligotropha carboxidovorans).